A 297-amino-acid chain; its full sequence is Ribosomal RNA small subunit methyltransferase A (297 aa).

Residues Asn31, Leu33, Gly58, Glu79, Asp104, and Asn129 each coordinate S-adenosyl-L-methionine.

Belongs to the class I-like SAM-binding methyltransferase superfamily. rRNA adenine N(6)-methyltransferase family. RsmA subfamily.

It localises to the cytoplasm. It carries out the reaction adenosine(1518)/adenosine(1519) in 16S rRNA + 4 S-adenosyl-L-methionine = N(6)-dimethyladenosine(1518)/N(6)-dimethyladenosine(1519) in 16S rRNA + 4 S-adenosyl-L-homocysteine + 4 H(+). Its function is as follows. Specifically dimethylates two adjacent adenosines (A1518 and A1519) in the loop of a conserved hairpin near the 3'-end of 16S rRNA in the 30S particle. May play a critical role in biogenesis of 30S subunits. This Staphylococcus aureus (strain Newman) protein is Ribosomal RNA small subunit methyltransferase A.